We begin with the raw amino-acid sequence, 281 residues long: UPF0294 protein VP2298 (281 aa).

It belongs to the UPF0294 family.

Its subcellular location is the cytoplasm. The protein is UPF0294 protein VP2298 of Vibrio parahaemolyticus serotype O3:K6 (strain RIMD 2210633).